The chain runs to 316 residues: Apolipoprotein E (316 aa).

Residues 1 to 18 (MKALWAVLVVTLLAGCLA) form the signal peptide. A run of 8 repeats spans residues 76-97 (VLME…EQLG), 98-119 (PMAE…SRLG), 120-141 (ADME…TMLG), 142-163 (QSTE…KRLM), 164-185 (RDAE…EGAE), 186-207 (RGVG…QRTA), 208-229 (NLGA…ARIR), and 230-251 (GRLE…EQME). The tract at residues 76-251 (VLMEDTMTEL…RLEEMREQME (176 aa)) is 8 X 22 AA approximate tandem repeats. Position 139 is a methionine sulfoxide (Met139). The residue at position 143 (Ser143) is a Phosphoserine. Residues 154-164 (HLRKLRKRLMR) form an LDL and other lipoprotein receptors binding region. A heparin-binding site is contributed by 158-161 (LRKR). Residues 206 to 286 (TANLGAGAGK…GWFEPLVEDM (81 aa)) form a lipid-binding and lipoprotein association region. A heparin-binding site is contributed by 225-232 (GARIRGRL). The segment at 262-316 (QQMRLQAEIFQARLKGWFEPLVEDMQRQWANLVEKIQASVAANPIPPSSVPQESP) is homooligomerization. The segment at 274–286 (RLKGWFEPLVEDM) is specificity for association with VLDL.

The protein belongs to the apolipoprotein A1/A4/E family. As to quaternary structure, homotetramer. May interact with ABCA1; functionally associated with ABCA1 in the biogenesis of HDLs. May interact with APP/A4 amyloid-beta peptide; the interaction is extremely stable in vitro but its physiological significance is unclear. May interact with MAPT. May interact with MAP2. In the cerebrospinal fluid, interacts with secreted SORL1. Interacts with PMEL; this allows the loading of PMEL luminal fragment on ILVs to induce fibril nucleation. APOE exists as multiple glycosylated and sialylated glycoforms within cells and in plasma. The extent of glycosylation and sialylation are tissue and context specific. In terms of processing, glycated in plasma VLDL. Post-translationally, phosphorylated by FAM20C in the extracellular medium.

It localises to the secreted. It is found in the extracellular space. The protein localises to the extracellular matrix. The protein resides in the extracellular vesicle. Its subcellular location is the endosome. It localises to the multivesicular body. In terms of biological role, APOE is an apolipoprotein, a protein associating with lipid particles, that mainly functions in lipoprotein-mediated lipid transport between organs via the plasma and interstitial fluids. APOE is a core component of plasma lipoproteins and is involved in their production, conversion and clearance. Apolipoproteins are amphipathic molecules that interact both with lipids of the lipoprotein particle core and the aqueous environment of the plasma. As such, APOE associates with chylomicrons, chylomicron remnants, very low density lipoproteins (VLDL) and intermediate density lipoproteins (IDL) but shows a preferential binding to high-density lipoproteins (HDL). It also binds a wide range of cellular receptors including the LDL receptor/LDLR, the LDL receptor-related proteins LRP1, LRP2 and LRP8 and the very low-density lipoprotein receptor/VLDLR that mediate the cellular uptake of the APOE-containing lipoprotein particles. Finally, APOE also has a heparin-binding activity and binds heparan-sulfate proteoglycans on the surface of cells, a property that supports the capture and the receptor-mediated uptake of APOE-containing lipoproteins by cells. A main function of APOE is to mediate lipoprotein clearance through the uptake of chylomicrons, VLDLs, and HDLs by hepatocytes. APOE is also involved in the biosynthesis by the liver of VLDLs as well as their uptake by peripheral tissues ensuring the delivery of triglycerides and energy storage in muscle, heart and adipose tissues. By participating in the lipoprotein-mediated distribution of lipids among tissues, APOE plays a critical role in plasma and tissues lipid homeostasis. APOE is also involved in two steps of reverse cholesterol transport, the HDLs-mediated transport of cholesterol from peripheral tissues to the liver, and thereby plays an important role in cholesterol homeostasis. First, it is functionally associated with ABCA1 in the biogenesis of HDLs in tissues. Second, it is enriched in circulating HDLs and mediates their uptake by hepatocytes. APOE also plays an important role in lipid transport in the central nervous system, regulating neuron survival and sprouting. This Peromyscus leucopus (White-footed mouse) protein is Apolipoprotein E (Apoe).